We begin with the raw amino-acid sequence, 606 residues long: Chaperone protein DnaK (606 aa).

T174 is subject to Phosphothreonine; by autocatalysis. The segment at 576–606 (QAAGSANPGGSQGTSQGNVYEADYKVEDDNK) is disordered. Positions 597–606 (ADYKVEDDNK) are enriched in basic and acidic residues.

Belongs to the heat shock protein 70 family.

Functionally, acts as a chaperone. The polypeptide is Chaperone protein DnaK (Caldanaerobacter subterraneus subsp. tengcongensis (strain DSM 15242 / JCM 11007 / NBRC 100824 / MB4) (Thermoanaerobacter tengcongensis)).